A 343-amino-acid polypeptide reads, in one-letter code: L-threonine 3-dehydrogenase (343 aa).

Cysteine 38 is a Zn(2+) binding site. Active-site charge relay system residues include threonine 40 and histidine 43. 6 residues coordinate Zn(2+): histidine 63, glutamate 64, cysteine 93, cysteine 96, cysteine 99, and cysteine 107. Residues isoleucine 175, aspartate 195, arginine 200, leucine 262–leucine 264, and isoleucine 286–tyrosine 287 each bind NAD(+).

This sequence belongs to the zinc-containing alcohol dehydrogenase family. In terms of assembly, homotetramer. Zn(2+) serves as cofactor.

It is found in the cytoplasm. It catalyses the reaction L-threonine + NAD(+) = (2S)-2-amino-3-oxobutanoate + NADH + H(+). Its pathway is amino-acid degradation; L-threonine degradation via oxydo-reductase pathway; glycine from L-threonine: step 1/2. Its function is as follows. Catalyzes the NAD(+)-dependent oxidation of L-threonine to 2-amino-3-ketobutyrate. This Saccharopolyspora erythraea (strain ATCC 11635 / DSM 40517 / JCM 4748 / NBRC 13426 / NCIMB 8594 / NRRL 2338) protein is L-threonine 3-dehydrogenase.